Here is a 376-residue protein sequence, read N- to C-terminus: 5-amino-6-(D-ribitylamino)uracil--L-tyrosine 4-hydroxyphenyl transferase 1 (376 aa).

The Radical SAM core domain maps to 50 to 275 (VTYVVNRNIN…PGLEDLKVYA (226 aa)). Residues Cys64, Cys68, and Cys71 each coordinate [4Fe-4S] cluster.

This sequence belongs to the radical SAM superfamily. CofH family. Consists of two subunits, CofG and CofH. The cofactor is [4Fe-4S] cluster.

It carries out the reaction 5-amino-6-(D-ribitylamino)uracil + L-tyrosine + S-adenosyl-L-methionine = 5-amino-5-(4-hydroxybenzyl)-6-(D-ribitylimino)-5,6-dihydrouracil + 2-iminoacetate + 5'-deoxyadenosine + L-methionine + H(+). It participates in cofactor biosynthesis; coenzyme F0 biosynthesis. Catalyzes the radical-mediated synthesis of 5-amino-5-(4-hydroxybenzyl)-6-(D-ribitylimino)-5,6-dihydrouracil from 5-amino-6-(D-ribitylamino)uracil and L-tyrosine. The polypeptide is 5-amino-6-(D-ribitylamino)uracil--L-tyrosine 4-hydroxyphenyl transferase 1 (Methanosarcina mazei (strain ATCC BAA-159 / DSM 3647 / Goe1 / Go1 / JCM 11833 / OCM 88) (Methanosarcina frisia)).